A 125-amino-acid polypeptide reads, in one-letter code: uncharacterized protein (125 aa).

It localises to the plastid. This is an uncharacterized protein from Euglena longa (Euglenophycean alga).